A 74-amino-acid chain; its full sequence is Ribosome modulation factor (74 aa).

Belongs to the ribosome modulation factor family.

The protein localises to the cytoplasm. Functionally, during stationary phase, converts 70S ribosomes to an inactive dimeric form (100S ribosomes). This chain is Ribosome modulation factor, found in Cellvibrio japonicus (strain Ueda107) (Pseudomonas fluorescens subsp. cellulosa).